Consider the following 208-residue polypeptide: Uracil phosphoribosyltransferase (208 aa).

5-phospho-alpha-D-ribose 1-diphosphate-binding positions include Arg78, Arg103, and 130-138 (DPMLATGGT). Uracil-binding positions include Ile193 and 198–200 (GDA). Asp199 is a binding site for 5-phospho-alpha-D-ribose 1-diphosphate.

The protein belongs to the UPRTase family. Requires Mg(2+) as cofactor.

The catalysed reaction is UMP + diphosphate = 5-phospho-alpha-D-ribose 1-diphosphate + uracil. It functions in the pathway pyrimidine metabolism; UMP biosynthesis via salvage pathway; UMP from uracil: step 1/1. Its activity is regulated as follows. Allosterically activated by GTP. In terms of biological role, catalyzes the conversion of uracil and 5-phospho-alpha-D-ribose 1-diphosphate (PRPP) to UMP and diphosphate. The polypeptide is Uracil phosphoribosyltransferase (Maridesulfovibrio salexigens (strain ATCC 14822 / DSM 2638 / NCIMB 8403 / VKM B-1763) (Desulfovibrio salexigens)).